We begin with the raw amino-acid sequence, 137 residues long: uncharacterized protein (137 aa).

This is an uncharacterized protein from Bacillus subtilis (strain 168).